A 454-amino-acid chain; its full sequence is UPF0210 protein EUBREC_1565 (454 aa).

It belongs to the UPF0210 family. In terms of assembly, homodimer.

In Agathobacter rectalis (strain ATCC 33656 / DSM 3377 / JCM 17463 / KCTC 5835 / VPI 0990) (Eubacterium rectale), this protein is UPF0210 protein EUBREC_1565.